Consider the following 101-residue polypeptide: Protein Tat (101 aa).

The interaction with human CREBBP stretch occupies residues 1–24 (MEPVDPRLEPWKHPGSQPKTACTN). Residues 1–48 (MEPVDPRLEPWKHPGSQPKTACTNCYCKKCCFHCQVCFITKGLGISYG) are transactivation. The Zn(2+) site is built by Cys22, Cys25, and Cys27. Residues 22–37 (CTNCYCKKCCFHCQVC) form a cysteine-rich region. An N6-acetyllysine; by host PCAF modification is found at Lys28. 4 residues coordinate Zn(2+): Cys30, His33, Cys34, and Cys37. Residues 38–48 (FITKGLGISYG) are core. The segment covering 48–57 (GRKKRRQRRR) has biased composition (basic residues). The interval 48 to 101 (GRKKRRQRRRAPPDSEVHQVSLPKQPASQPQGDPTGPKESKKKVERETETDPVH) is disordered. Positions 49-57 (RKKRRQRRR) match the Nuclear localization signal, RNA-binding (TAR), and protein transduction motif. The interval 49–86 (RKKRRQRRRAPPDSEVHQVSLPKQPASQPQGDPTGPKE) is interaction with the host capping enzyme RNGTT. Lys50 and Lys51 each carry N6-acetyllysine; by host EP300 and GCN5L2. Arg52 and Arg53 each carry asymmetric dimethylarginine; by host PRMT6. Lys71 participates in a covalent cross-link: Glycyl lysine isopeptide (Lys-Gly) (interchain with G-Cter in ubiquitin). A compositionally biased stretch (basic and acidic residues) spans 83-101 (GPKESKKKVERETETDPVH).

The protein belongs to the lentiviruses Tat family. In terms of assembly, interacts with host CCNT1. Associates with the P-TEFb complex composed at least of Tat, P-TEFb (CDK9 and CCNT1), TAR RNA, RNA Pol II. Recruits the HATs CREBBP, TAF1/TFIID, EP300, PCAF and GCN5L2. Interacts with host KAT5/Tip60; this interaction targets the latter to degradation. Interacts with the host deacetylase SIRT1. Interacts with host capping enzyme RNGTT; this interaction stimulates RNGTT. Binds to host KDR, and to the host integrins ITGAV/ITGB3 and ITGA5/ITGB1. Interacts with host KPNB1/importin beta-1 without previous binding to KPNA1/importin alpha-1. Interacts with EIF2AK2. Interacts with host nucleosome assembly protein NAP1L1; this interaction may be required for the transport of Tat within the nucleus, since the two proteins interact at the nuclear rim. Interacts with host C1QBP/SF2P32; this interaction involves lysine-acetylated Tat. Interacts with the host chemokine receptors CCR2, CCR3 and CXCR4. Interacts with host DPP4/CD26; this interaction may trigger an anti-proliferative effect. Interacts with host LDLR. Interacts with the host extracellular matrix metalloproteinase MMP1. Interacts with host PRMT6; this interaction mediates Tat's methylation. Interacts with, and is ubiquitinated by MDM2/Hdm2. Interacts with host PSMC3 and HTATIP2. Interacts with STAB1; this interaction may overcome SATB1-mediated repression of IL2 and IL2RA (interleukin) in T cells by binding to the same domain than HDAC1. Interacts (when acetylated) with human CDK13, thereby increasing HIV-1 mRNA splicing and promoting the production of the doubly spliced HIV-1 protein Nef. Interacts with host TBP; this interaction modulates the activity of transcriptional pre-initiation complex. Interacts with host RELA. Interacts with host PLSCR1; this interaction negatively regulates Tat transactivation activity by altering its subcellular distribution. Asymmetrical arginine methylation by host PRMT6 seems to diminish the transactivation capacity of Tat and affects the interaction with host CCNT1. Post-translationally, acetylation by EP300, CREBBP, GCN5L2/GCN5 and PCAF regulates the transactivation activity of Tat. EP300-mediated acetylation of Lys-50 promotes dissociation of Tat from the TAR RNA through the competitive binding to PCAF's bromodomain. In addition, the non-acetylated Tat's N-terminus can also interact with PCAF. PCAF-mediated acetylation of Lys-28 enhances Tat's binding to CCNT1. Lys-50 is deacetylated by SIRT1. In terms of processing, polyubiquitination by host MDM2 does not target Tat to degradation, but activates its transactivation function and fosters interaction with CCNT1 and TAR RNA. Phosphorylated by EIF2AK2 on serine and threonine residues adjacent to the basic region important for TAR RNA binding and function. Phosphorylation of Tat by EIF2AK2 is dependent on the prior activation of EIF2AK2 by dsRNA.

The protein resides in the host nucleus. The protein localises to the host nucleolus. It localises to the host cytoplasm. It is found in the secreted. In terms of biological role, transcriptional activator that increases RNA Pol II processivity, thereby increasing the level of full-length viral transcripts. Recognizes a hairpin structure at the 5'-LTR of the nascent viral mRNAs referred to as the transactivation responsive RNA element (TAR) and recruits the cyclin T1-CDK9 complex (P-TEFb complex) that will in turn hyperphosphorylate the RNA polymerase II to allow efficient elongation. The CDK9 component of P-TEFb and other Tat-activated kinases hyperphosphorylate the C-terminus of RNA Pol II that becomes stabilized and much more processive. Other factors such as HTATSF1/Tat-SF1, SUPT5H/SPT5, and HTATIP2 are also important for Tat's function. Besides its effect on RNA Pol II processivity, Tat induces chromatin remodeling of proviral genes by recruiting the histone acetyltransferases (HATs) CREBBP, EP300 and PCAF to the chromatin. This also contributes to the increase in proviral transcription rate, especially when the provirus integrates in transcriptionally silent region of the host genome. To ensure maximal activation of the LTR, Tat mediates nuclear translocation of NF-kappa-B by interacting with host RELA. Through its interaction with host TBP, Tat may also modulate transcription initiation. Tat can reactivate a latently infected cell by penetrating in it and transactivating its LTR promoter. In the cytoplasm, Tat is thought to act as a translational activator of HIV-1 mRNAs. Functionally, extracellular circulating Tat can be endocytosed by surrounding uninfected cells via the binding to several surface receptors such as CD26, CXCR4, heparan sulfate proteoglycans (HSPG) or LDLR. Neurons are rarely infected, but they internalize Tat via their LDLR. Through its interaction with nuclear HATs, Tat is potentially able to control the acetylation-dependent cellular gene expression. Modulates the expression of many cellular genes involved in cell survival, proliferation or in coding for cytokines or cytokine receptors. Tat plays a role in T-cell and neurons apoptosis. Tat induced neurotoxicity and apoptosis probably contribute to neuroAIDS. Circulating Tat also acts as a chemokine-like and/or growth factor-like molecule that binds to specific receptors on the surface of the cells, affecting many cellular pathways. In the vascular system, Tat binds to ITGAV/ITGB3 and ITGA5/ITGB1 integrins dimers at the surface of endothelial cells and competes with bFGF for heparin-binding sites, leading to an excess of soluble bFGF. This chain is Protein Tat, found in Human immunodeficiency virus type 1 group M subtype B (isolate SF162) (HIV-1).